The sequence spans 190 residues: Elongation factor P (190 aa).

Belongs to the elongation factor P family.

The protein resides in the cytoplasm. Its pathway is protein biosynthesis; polypeptide chain elongation. Functionally, involved in peptide bond synthesis. Stimulates efficient translation and peptide-bond synthesis on native or reconstituted 70S ribosomes in vitro. Probably functions indirectly by altering the affinity of the ribosome for aminoacyl-tRNA, thus increasing their reactivity as acceptors for peptidyl transferase. The chain is Elongation factor P from Bartonella bacilliformis (strain ATCC 35685 / KC583 / Herrer 020/F12,63).